Reading from the N-terminus, the 83-residue chain is MALSTRTQAACLLLLLLASLSSTTYLQQQMRQTTELQPLHGEESRADIAIPMQKRRKRDINFPICRFCCQCCNKPSCGICCEE.

Positions 1–26 (MALSTRTQAACLLLLLLASLSSTTYL) are cleaved as a signal peptide. The propeptide occupies 27-53 (QQQMRQTTELQPLHGEESRADIAIPMQ). Cystine bridges form between cysteine 65-cysteine 81, cysteine 68-cysteine 71, cysteine 69-cysteine 77, and cysteine 72-cysteine 80.

This sequence belongs to the hepcidin family. In terms of tissue distribution, highly expressed in the liver and to a much lesser extent in the heart. Also expressed in pancreas.

It is found in the secreted. Functionally, seems to act as a signaling molecule involved in the maintenance of iron homeostasis. This is Hepcidin-2 (Hamp2) from Mus musculus (Mouse).